A 113-amino-acid polypeptide reads, in one-letter code: Large ribosomal subunit protein uL24 (113 aa).

Belongs to the universal ribosomal protein uL24 family. In terms of assembly, part of the 50S ribosomal subunit.

Functionally, one of two assembly initiator proteins, it binds directly to the 5'-end of the 23S rRNA, where it nucleates assembly of the 50S subunit. One of the proteins that surrounds the polypeptide exit tunnel on the outside of the subunit. The polypeptide is Large ribosomal subunit protein uL24 (Micrococcus luteus (Micrococcus lysodeikticus)).